Consider the following 314-residue polypeptide: O-antigen chain rhamnosyltransferase RfbN (314 aa).

This sequence belongs to the glycosyltransferase 2 family.

The enzyme catalyses alpha-D-galactosyl-di-trans,octa-cis-undecaprenyl diphosphate + dTDP-beta-L-rhamnose = alpha-L-rhamnosyl-(1-&gt;3)-alpha-D-galactosyl-1-diphospho-di-trans,octa-cis-undecaprenol + dTDP + H(+). The protein operates within bacterial outer membrane biogenesis; LPS O-antigen biosynthesis. Functionally, rhamnosyltransferase involved in the biosynthesis of the repeat unit of the lipopolysaccharide (LPS) O-antigen region. Catalyzes the addition of a rhamnose to the galactosyl-undecaprenyl diphosphate intermediate. The protein is O-antigen chain rhamnosyltransferase RfbN of Salmonella typhimurium (strain LT2 / SGSC1412 / ATCC 700720).